A 377-amino-acid polypeptide reads, in one-letter code: Alternative oxidase, mitochondrial (377 aa).

Residues Leu149–Leu169 form a helical membrane-spanning segment. Fe cation-binding residues include Glu156, Glu195, and His198. The helical transmembrane segment at Ile214–Ser234 threads the bilayer. 3 residues coordinate Fe cation: Glu246, Glu303, and His306.

This sequence belongs to the alternative oxidase family. The cofactor is Fe cation.

The protein resides in the mitochondrion inner membrane. Catalyzes cyanide-resistant oxygen consumption. May increase respiration when the cytochrome respiratory pathway is restricted, or in response to low temperatures. This Pyricularia oryzae (strain 70-15 / ATCC MYA-4617 / FGSC 8958) (Rice blast fungus) protein is Alternative oxidase, mitochondrial (AOX1).